We begin with the raw amino-acid sequence, 475 residues long: Methionine aminopeptidase 2-1 (475 aa).

The span at 1 to 12 (MGSKSPEGHRQT) shows a compositional bias: basic and acidic residues. The segment at 1–97 (MGSKSPEGHR…LKQSSPPRVL (97 aa)) is disordered. A compositionally biased stretch (acidic residues) spans 44–57 (NLDDDNDDDGEANE). Residues 70–83 (KKKKRKRSKKKTKK) are compositionally biased toward basic residues. Substrate is bound at residue histidine 211. Residues aspartate 232, aspartate 243, and histidine 312 each coordinate a divalent metal cation. Residue histidine 320 participates in substrate binding. 2 residues coordinate a divalent metal cation: glutamate 345 and glutamate 456.

Belongs to the peptidase M24A family. Methionine aminopeptidase eukaryotic type 2 subfamily. Co(2+) is required as a cofactor. The cofactor is Zn(2+). It depends on Mn(2+) as a cofactor. Fe(2+) serves as cofactor.

Its subcellular location is the cytoplasm. It carries out the reaction Release of N-terminal amino acids, preferentially methionine, from peptides and arylamides.. In terms of biological role, cotranslationally removes the N-terminal methionine from nascent proteins. The N-terminal methionine is often cleaved when the second residue in the primary sequence is small and uncharged (Met-Ala-, Cys, Gly, Pro, Ser, Thr, or Val). In Aspergillus niger (strain ATCC MYA-4892 / CBS 513.88 / FGSC A1513), this protein is Methionine aminopeptidase 2-1.